A 701-amino-acid polypeptide reads, in one-letter code: T-cell immunomodulatory protein homolog (701 aa).

The N-terminal stretch at Met1 to Ser29 is a signal peptide. Topologically, residues Gly30–Lys657 are extracellular. N-linked (GlcNAc...) asparagine glycosylation is found at Asn148, Asn180, Asn217, Asn258, Asn458, Asn522, and Asn571. The chain crosses the membrane as a helical span at residues Phe658–Ile678. Over Leu679–Gly701 the chain is Cytoplasmic.

This sequence belongs to the TIP family.

The protein resides in the membrane. May protect the parasite against attack by the host immune system by immunomodulation. In Plasmodium yoelii yoelii, this protein is T-cell immunomodulatory protein homolog.